We begin with the raw amino-acid sequence, 58 residues long: Small ribosomal subunit protein bS21 (58 aa).

The interval 35-58 is disordered; it reads REHYEKPSVKKKKKSEAARKRKFK. Residues 43 to 58 show a composition bias toward basic residues; it reads VKKKKKSEAARKRKFK.

It belongs to the bacterial ribosomal protein bS21 family.

The sequence is that of Small ribosomal subunit protein bS21 from Clostridium botulinum (strain Alaska E43 / Type E3).